Reading from the N-terminus, the 333-residue chain is Taste receptor type 2 member 110 (333 aa).

The Extracellular portion of the chain corresponds to 1–13 (MFSQIISTSDIFT). The chain crosses the membrane as a helical span at residues 14–34 (FTIILFVELVIGILGNGFIAL). The Cytoplasmic portion of the chain corresponds to 35–60 (VNIMDWTKRRSISSADQILTALAITR). Residues 61–81 (FLYVWFMIICILLFMLCPHLL) form a helical membrane-spanning segment. The Extracellular portion of the chain corresponds to 82–89 (TRSEIVTS). Residues 90–110 (IGIIWIVNNHFSVWLATCLGV) traverse the membrane as a helical segment. The Cytoplasmic portion of the chain corresponds to 111 to 133 (FYFLKIANFSNSLFLYLKWRVKK). Residues 134-154 (VVLMIIQVSMIFLILNLLSLS) traverse the membrane as a helical segment. Over 155–205 (MYDQFSIDVYEGNTSYNLGDSTPFPTISLFINSSKVFVITNSSHIFLPINS) the chain is Extracellular. 2 N-linked (GlcNAc...) asparagine glycosylation sites follow: Asn-186 and Asn-195. Residues 206–226 (LFMLIPFTVSLVAFLMLIFSL) traverse the membrane as a helical segment. Topologically, residues 227–255 (WKHHKKMQVNAKPPRDASTMAHIKALQTG) are cytoplasmic. A helical membrane pass occupies residues 256-276 (FSFLLLYAVYLLFIVIGMLSL). At 277-283 (RLIGGKL) the chain is on the extracellular side. Residues 284 to 304 (ILLFDHISGIGFPISHSFVLI) form a helical membrane-spanning segment. The Cytoplasmic portion of the chain corresponds to 305-333 (LGNNKLRQASLSVLHCLRCRSKDMDTMGP).

Belongs to the G-protein coupled receptor T2R family.

The protein localises to the membrane. Its function is as follows. Gustducin-coupled receptor implicated in the perception of bitter compounds in the oral cavity and the gastrointestinal tract. Signals through PLCB2 and the calcium-regulated cation channel TRPM5. The sequence is that of Taste receptor type 2 member 110 from Mus musculus (Mouse).